We begin with the raw amino-acid sequence, 769 residues long: Protein lethal(2)denticleless (769 aa).

6 WD repeats span residues cysteine 99–glutamate 129, glycine 143–aspartate 174, glycine 194–aspartate 249, arginine 264–asparagine 303, asparagine 320–asparagine 349, and glycine 362–arginine 393. The segment at threonine 196–serine 221 is disordered. Residue threonine 201 is modified to Phosphothreonine. Residue serine 204 is modified to Phosphoserine. Disordered regions lie at residues arginine 448 to arginine 467, alanine 476 to threonine 562, and serine 655 to aspartate 769. Position 456 is a phosphothreonine (threonine 456). At serine 459 the chain carries Phosphoserine. The span at proline 503–isoleucine 518 shows a compositional bias: polar residues. Serine 524 is subject to Phosphoserine. The segment covering serine 524–serine 533 has biased composition (basic and acidic residues). Positions serine 546–threonine 562 are enriched in polar residues. Serine 655 is modified (phosphoserine). Residues arginine 657 to cysteine 666 are compositionally biased toward polar residues. Phosphoserine is present on residues serine 679, serine 691, and serine 711. The span at alanine 689–proline 704 shows a compositional bias: low complexity. The segment covering threonine 705–threonine 714 has biased composition (polar residues). A compositionally biased stretch (low complexity) spans proline 728 to aspartate 743. The segment covering serine 758–aspartate 769 has biased composition (polar residues).

This sequence belongs to the WD repeat cdt2 family. As to quaternary structure, component of the DCX(DTL) E3 ubiquitin ligase complex, at least composed of Cul-4, pic/DDB1, l(2)dtl/CDT2 and Roc1a. Ubiquitously expressed during embryogenesis with no sign of tissue specificity in expression up to stage 17.

Its subcellular location is the cytoplasm. It participates in protein modification; protein ubiquitination. Functionally, substrate-specific adapter of a DCX (DDB1-CUL4-X-box) E3 ubiquitin-protein ligase complex required for cell cycle control. The DCX(DTL) complex, also named CRL4(CDT2) complex, mediates the polyubiquitination and subsequent degradation of E2f during S phase. E2f degradation is necessary to ensure proper development. Substrates require their interaction with PCNA for their polyubiquitination: substrates interact with PCNA via their PIP-box, leading to recruit the DCX(DTL) complex. The polypeptide is Protein lethal(2)denticleless (l(2)dtl) (Drosophila melanogaster (Fruit fly)).